Consider the following 262-residue polypeptide: Acyl-[acyl-carrier-protein]--UDP-N-acetylglucosamine O-acyltransferase (262 aa).

It belongs to the transferase hexapeptide repeat family. LpxA subfamily. In terms of assembly, homotrimer.

It is found in the cytoplasm. It catalyses the reaction a (3R)-hydroxyacyl-[ACP] + UDP-N-acetyl-alpha-D-glucosamine = a UDP-3-O-[(3R)-3-hydroxyacyl]-N-acetyl-alpha-D-glucosamine + holo-[ACP]. It participates in glycolipid biosynthesis; lipid IV(A) biosynthesis; lipid IV(A) from (3R)-3-hydroxytetradecanoyl-[acyl-carrier-protein] and UDP-N-acetyl-alpha-D-glucosamine: step 1/6. Involved in the biosynthesis of lipid A, a phosphorylated glycolipid that anchors the lipopolysaccharide to the outer membrane of the cell. The polypeptide is Acyl-[acyl-carrier-protein]--UDP-N-acetylglucosamine O-acyltransferase (Enterobacter sp. (strain 638)).